A 126-amino-acid polypeptide reads, in one-letter code: Holo-[acyl-carrier-protein] synthase (126 aa).

Mg(2+) contacts are provided by Asp-9 and Glu-58.

It belongs to the P-Pant transferase superfamily. AcpS family. Requires Mg(2+) as cofactor.

The protein resides in the cytoplasm. It carries out the reaction apo-[ACP] + CoA = holo-[ACP] + adenosine 3',5'-bisphosphate + H(+). Functionally, transfers the 4'-phosphopantetheine moiety from coenzyme A to a Ser of acyl-carrier-protein. This Klebsiella pneumoniae (strain 342) protein is Holo-[acyl-carrier-protein] synthase.